The chain runs to 609 residues: Glutamine--fructose-6-phosphate aminotransferase [isomerizing] (609 aa).

Catalysis depends on C2, which acts as the Nucleophile; for GATase activity. Residues 2–218 (CGIVGAIAQR…EGDIAEITRR (217 aa)) form the Glutamine amidotransferase type-2 domain. SIS domains are found at residues 286–426 (ADDL…LKGL) and 458–599 (LAED…VDQP). K604 serves as the catalytic For Fru-6P isomerization activity.

As to quaternary structure, homodimer.

The protein localises to the cytoplasm. The enzyme catalyses D-fructose 6-phosphate + L-glutamine = D-glucosamine 6-phosphate + L-glutamate. Functionally, catalyzes the first step in hexosamine metabolism, converting fructose-6P into glucosamine-6P using glutamine as a nitrogen source. This Salmonella typhi protein is Glutamine--fructose-6-phosphate aminotransferase [isomerizing].